Here is a 203-residue protein sequence, read N- to C-terminus: Type III effector protein HopBF1 (203 aa).

The disordered stretch occupies residues 1 to 23 (MFNVSNNVAPSRYQGPSSTSVTP). Residues S40, Q41, K42, D107, I109, and D114 each coordinate ATP. D155 is an active-site residue. Position 157 (Q157) interacts with ATP.

It belongs to the HopBF1 family.

It localises to the secreted. The protein resides in the host cell. The enzyme catalyses L-seryl-[protein] + ATP = O-phospho-L-seryl-[protein] + ADP + H(+). Functionally, effector protein that targets and inactivates the eukaryotic molecular chaperone HSP90 during infection. HopBF1 is recognized by HSP90 as a host client. As a result, HopBF1 phosphorylates HSP90, leading to the inactivation of the HSP90 ATPase activity and chaperone function. In vitro, can phosphorylate the recombinant yeast HSP82 (HSP90) and human HSP 90-beta on Ser-108. The polypeptide is Type III effector protein HopBF1 (Ewingella americana (strain ATCC 33852 / DSM 4580 / CCUG 14506 / JCM 5911 / LMG 7869 / NCTC 12157 / CDC 1468-78)).